The following is a 94-amino-acid chain: Large ribosomal subunit protein uL23 (94 aa).

This sequence belongs to the universal ribosomal protein uL23 family. Part of the 50S ribosomal subunit. Contacts protein L29, and trigger factor when it is bound to the ribosome.

Its function is as follows. One of the early assembly proteins it binds 23S rRNA. One of the proteins that surrounds the polypeptide exit tunnel on the outside of the ribosome. Forms the main docking site for trigger factor binding to the ribosome. The sequence is that of Large ribosomal subunit protein uL23 from Trichlorobacter lovleyi (strain ATCC BAA-1151 / DSM 17278 / SZ) (Geobacter lovleyi).